Consider the following 64-residue polypeptide: Disintegrin CV-11-beta (64 aa).

Residues 1–64 (NSAHPCCDPV…SDCPRNPWKD (64 aa)) enclose the Disintegrin domain. Cystine bridges form between cysteine 6–cysteine 29, cysteine 20–cysteine 26, cysteine 25–cysteine 50, and cysteine 38–cysteine 57. The Cell attachment site signature appears at 42–44 (RGD).

Belongs to the disintegrin family. Dimeric disintegrin subfamily. In terms of assembly, heterodimer with subunit alpha; disulfide-linked. Expressed by the venom gland.

The protein resides in the secreted. Functionally, inhibits ADP-induced human platelet aggregation. Antagonist of alpha-IIb/beta-3 (ITGA2B/ITGB3). The sequence is that of Disintegrin CV-11-beta from Cerastes vipera (Sahara sand viper).